The following is a 333-amino-acid chain: Adenosine deaminase (333 aa).

Histidine 12 and histidine 14 together coordinate Zn(2+). Histidine 14, aspartate 16, and glycine 170 together coordinate substrate. Residue histidine 197 coordinates Zn(2+). Glutamate 200 functions as the Proton donor in the catalytic mechanism. Residue aspartate 278 participates in Zn(2+) binding. Aspartate 279 is a binding site for substrate.

This sequence belongs to the metallo-dependent hydrolases superfamily. Adenosine and AMP deaminases family. Adenosine deaminase subfamily. Requires Zn(2+) as cofactor.

It carries out the reaction adenosine + H2O + H(+) = inosine + NH4(+). The catalysed reaction is 2'-deoxyadenosine + H2O + H(+) = 2'-deoxyinosine + NH4(+). Its function is as follows. Catalyzes the hydrolytic deamination of adenosine and 2-deoxyadenosine. The protein is Adenosine deaminase of Salmonella gallinarum (strain 287/91 / NCTC 13346).